Here is a 303-residue protein sequence, read N- to C-terminus: Oxygen-dependent coproporphyrinogen-III oxidase (303 aa).

Residue S93 coordinates substrate. H97 and H107 together coordinate a divalent metal cation. The active-site Proton donor is the H107. Residue 109–111 participates in substrate binding; the sequence is NVR. Residues H149 and H179 each coordinate a divalent metal cation. An important for dimerization region spans residues 244 to 279; that stretch reads YVEFNLVFDRGTLFGLQSGGRTESILLSMPPLAQWR. 262–264 contributes to the substrate binding site; sequence GGR.

This sequence belongs to the aerobic coproporphyrinogen-III oxidase family. In terms of assembly, homodimer. The cofactor is a divalent metal cation.

It is found in the cytoplasm. The enzyme catalyses coproporphyrinogen III + O2 + 2 H(+) = protoporphyrinogen IX + 2 CO2 + 2 H2O. The protein operates within porphyrin-containing compound metabolism; protoporphyrin-IX biosynthesis; protoporphyrinogen-IX from coproporphyrinogen-III (O2 route): step 1/1. In terms of biological role, involved in the heme biosynthesis. Catalyzes the aerobic oxidative decarboxylation of propionate groups of rings A and B of coproporphyrinogen-III to yield the vinyl groups in protoporphyrinogen-IX. The protein is Oxygen-dependent coproporphyrinogen-III oxidase of Bordetella parapertussis (strain 12822 / ATCC BAA-587 / NCTC 13253).